The following is a 601-amino-acid chain: MSSDSMRNIRNFSIIAHVDHGKSTLADRIIQLCGGLQAREMEAQVLDSNPIERERGITIKAQSVSLPYTAKDGQVYHLNFIDTPGHVDFSYEVSRSLAACEGALLVVDAAQGVEAQSVANCYTAVEQGLEVVPVLNKIDLPTADVDRAKAEIEAVIGIDAEDAVAVSAKTGLNIDLVLEAIVHRIPPPAPRDTDKLQALIIDSWFDNYLGVVSLVRVMQGEIKPGSKILVMSTGRTHLVDKVGVFTPKRKELSALGAGEVGWINASIKDVHGAPVGDTLTLAADPAPHALPGFQEMQPRVFAGLFPVDAEDYPDLREALDKLRLNDAALRFEPESSEAMGFGFRCGFLGMLHMEIVQERLEREYNLNLISTAPTVVYEVLKTDGSVIPMDNPSKLPPLNNVEEIREPIIRANILTPPDYVGNIITLCEEKRGSQIGINYLGSQVQISYELPMAEVVLDFFDKLKSVSRGYASLDYHFLRFDPGPFVRVDTLINGDKVDALSIIVHRSYADRRGRELCEKMKDLIPRQMFDVAIQAAVGSQIISRSTVKAMRKNVLAKCYGGDVSRKKKLLEKQKEGKKRMKQVGRVEIPQEAFLAVLQMDK.

Positions 7–189 (RNIRNFSIIA…AIVHRIPPPA (183 aa)) constitute a tr-type G domain. Residues 19-24 (DHGKST) and 136-139 (NKID) contribute to the GTP site.

It belongs to the TRAFAC class translation factor GTPase superfamily. Classic translation factor GTPase family. LepA subfamily.

It is found in the cell inner membrane. The catalysed reaction is GTP + H2O = GDP + phosphate + H(+). Functionally, required for accurate and efficient protein synthesis under certain stress conditions. May act as a fidelity factor of the translation reaction, by catalyzing a one-codon backward translocation of tRNAs on improperly translocated ribosomes. Back-translocation proceeds from a post-translocation (POST) complex to a pre-translocation (PRE) complex, thus giving elongation factor G a second chance to translocate the tRNAs correctly. Binds to ribosomes in a GTP-dependent manner. In Xanthomonas oryzae pv. oryzae (strain MAFF 311018), this protein is Elongation factor 4.